The primary structure comprises 612 residues: MIDENFKKKLAVSRERVEDLFYFENSKEIGRGTYGLVYKAVPKHSNGRFPNKEYALKMIEGQGFSMSACREIALFRELRHPNLICLQRVFLTNEKKVWLLLDYAEHDLWHVIKHHRTAKTKKVPIMVPRNMVKNILFQILSGMHYLHSNWVLHRDLKPANILLMGDGGPDMRGRVKIADLGFSRIFANPLKPMAELDPVVVTFWYRAPELLLGAKHYTKAIDVWAIGCIFAELLTAEPLFFCKEEDIKAQNPYHYDQVKRIFHLLGYPSDTDWPDMKKMPDHQRLLNDARNEGTPIQTFPNSLQRYFDKWKINSQSSPYRLLVKLLTVDPLKRVSCEEAMNDIYFRKMERPPRETDDVFNRYPIPYAKKEQQITIPIDQFQQQQQQQQQQQQQQQQQQQQQQQQQMQQPQIGPPQMMGQPQMGQPQMGQPQMGQPQMGQPQMGQPQMVPSQMGQPPMGGPHPGVVAPDGHAHQMMQQQHQSQHHMQYQQMHDSMQGGMDDGGPQAKMMRMGNVPVGRYGPMGPPYGPQDFHAPQGPPMMQMMPQPGPSGYYQQRPGQPPGPGPQGYMNPQMGMTMGMRPQGVPQQAYMPGRGMPPPQGPNPQQQQQWQQYHR.

In terms of domain architecture, Protein kinase spans Phe23 to Phe345. ATP is bound by residues Ile29 to Val37 and Lys57. Asp155 (proton acceptor) is an active-site residue. Composition is skewed to low complexity over residues Gln403 to Pro455, His472 to His483, Pro543 to Pro555, Gln564 to Met573, and Asn600 to Arg612. Disordered regions lie at residues Gln403–His483 and Pro543–Arg612.

Belongs to the protein kinase superfamily. CMGC Ser/Thr protein kinase family. CDC2/CDKX subfamily. In terms of assembly, component of the Mediator complex. Mg(2+) is required as a cofactor.

It localises to the nucleus. It catalyses the reaction L-seryl-[protein] + ATP = O-phospho-L-seryl-[protein] + ADP + H(+). It carries out the reaction L-threonyl-[protein] + ATP = O-phospho-L-threonyl-[protein] + ADP + H(+). The enzyme catalyses [DNA-directed RNA polymerase] + ATP = phospho-[DNA-directed RNA polymerase] + ADP + H(+). Its function is as follows. Component of the Mediator complex, a coactivator involved in regulated gene transcription of nearly all RNA polymerase II-dependent genes. Mediator functions as a bridge to convey information from gene-specific regulatory proteins to the basal RNA polymerase II transcription machinery. Mediator is recruited to promoters by direct interactions with regulatory proteins and serves as a scaffold for the assembly of a functional pre-initiation complex with RNA polymerase II and the general transcription factors. Phosphorylates the CTD (C-terminal domain) of the large subunit of RNA polymerase II (RNAp II), which may inhibit the formation of a transcription initiation complex. This is Cyclin-dependent kinase 8 (cdk-8) from Caenorhabditis briggsae.